Reading from the N-terminus, the 424-residue chain is Hemagglutinin-esterase (424 aa).

Positions 1–16 (MFLLPRFVLVSCIIGS) are cleaved as a signal peptide. Residues 7–127 (FVLVSCIIGS…SNDIWMQNKG (121 aa)) are esterase domain 1. Residues 17–392 (LGFDNPPTNV…PICVYDPLPL (376 aa)) are Virion surface-facing. The active-site Nucleophile is Ser-40. A disulfide bridge links Cys-44 with Cys-65. N-linked (GlcNAc...) asparagine; by host glycosylation is found at Asn-54, Asn-89, Asn-153, Asn-236, and Asn-301. Disulfide bonds link Cys-113-Cys-162, Cys-197-Cys-276, and Cys-205-Cys-249. The receptor binding stretch occupies residues 128–266 (LFYTQVYKNM…GNYLAISNEL (139 aa)). The interval 267-379 (LLTVPTKAIC…RCPTAADINN (113 aa)) is esterase domain 2. A disulfide bridge connects residues Cys-307 and Cys-312. Asn-316 carries N-linked (GlcNAc...) asparagine; by host glycosylation. Catalysis depends on charge relay system residues Asp-326 and His-329. Cys-347 and Cys-371 are joined by a disulfide. The N-linked (GlcNAc...) asparagine; by host glycan is linked to Asn-358. The chain crosses the membrane as a helical span at residues 393–413 (ILLGILLGVAVIIIVVLLLYF). Residues 414–424 (MVDNGTRLHDA) lie on the Intravirion side of the membrane. Residue Asn-417 is glycosylated (N-linked (GlcNAc...) asparagine; by host).

This sequence belongs to the influenza type C/coronaviruses hemagglutinin-esterase family. As to quaternary structure, homodimer; disulfide-linked. Forms a complex with the M protein in the pre-Golgi. Associates then with S-M complex to form a ternary complex S-M-HE. N-glycosylated in the host RER.

The protein resides in the virion membrane. The protein localises to the host cell membrane. The enzyme catalyses N-acetyl-9-O-acetylneuraminate + H2O = N-acetylneuraminate + acetate + H(+). The catalysed reaction is N-acetyl-4-O-acetylneuraminate + H2O = N-acetylneuraminate + acetate + H(+). Structural protein that makes short spikes at the surface of the virus. Contains receptor binding and receptor-destroying activities. Mediates de-O-acetylation of N-acetyl-4-O-acetylneuraminic acid, which is probably the receptor determinant recognized by the virus on the surface of erythrocytes and susceptible cells. This receptor-destroying activity is important for virus release as it probably helps preventing self-aggregation and ensures the efficient spread of the progeny virus from cell to cell. May serve as a secondary viral attachment protein for initiating infection, the spike protein being the major one. May become a target for both the humoral and the cellular branches of the immune system. The polypeptide is Hemagglutinin-esterase (Bovine coronavirus (strain LY-138) (BCoV)).